Here is a 194-residue protein sequence, read N- to C-terminus: Orotate phosphoribosyltransferase (194 aa).

Residues Arg-102, Lys-103, Lys-106, His-108, and 129–137 (EDVVTTGGS) contribute to the 5-phospho-alpha-D-ribose 1-diphosphate site. Orotate-binding residues include Thr-133 and Arg-161.

Belongs to the purine/pyrimidine phosphoribosyltransferase family. PyrE subfamily. Homodimer. It depends on Mg(2+) as a cofactor.

It catalyses the reaction orotidine 5'-phosphate + diphosphate = orotate + 5-phospho-alpha-D-ribose 1-diphosphate. It functions in the pathway pyrimidine metabolism; UMP biosynthesis via de novo pathway; UMP from orotate: step 1/2. Its function is as follows. Catalyzes the transfer of a ribosyl phosphate group from 5-phosphoribose 1-diphosphate to orotate, leading to the formation of orotidine monophosphate (OMP). This is Orotate phosphoribosyltransferase from Prochlorococcus marinus (strain MIT 9211).